The following is a 318-amino-acid chain: Retinol dehydrogenase 5 (318 aa).

The chain crosses the membrane as a helical span at residues 1 to 23; the sequence is MWLPLLLGALLWAVLWLLRDRQS. Residues 24–288 are Lumenal-facing; that stretch reads LPASDAFIFI…TRYSPGWDAK (265 aa). 32–56 is an NADP(+) binding site; sequence FITGCDSGFGRLLALQLDQKGFQVL. Ser163 provides a ligand contact to substrate. The active-site Proton acceptor is Tyr175. Residues 289-309 form a helical membrane-spanning segment; that stretch reads LLWLPASYLPARVVDAVLTWI. Residues 310–318 are Cytoplasmic-facing; it reads LPRPAQSVS.

This sequence belongs to the short-chain dehydrogenases/reductases (SDR) family. In terms of assembly, homodimer. Expressed in eye, liver, kidney, brain, intestine, placenta, epididymus and submaxillary gland. In eye, strongly expressed in the retinal pigment epithelium, with lower expression levels detected in the inner segment of the photoreceptor cells and in the outer plexiform layer. In kidney, strong expression detected in the distal tubules and the transitional epithelium in the renal pelvis, with weaker expression detected in the epithelium of the outer stripe of the outer zone of the medulla. In liver, detected in hepatocytes in the centrilobular area. In lung, present in club cells in the epithelium of the bronchiole, in parenchyma and in cartilage surrounding the secondary bronchi. In skin, expressed in epidermis, hair follicles and mast cells in the dermis. Expressed in heart. Not detected in heart. Not detected in lung, spleen, skeletal muscle and testis.

The protein resides in the endoplasmic reticulum membrane. It catalyses the reaction 11-cis-retinol + NAD(+) = 11-cis-retinal + NADH + H(+). The enzyme catalyses 9-cis-retinol + NAD(+) = 9-cis-retinal + NADH + H(+). The catalysed reaction is 13-cis-retinol + NAD(+) = 13-cis-retinal + NADH + H(+). It carries out the reaction androsterone + NAD(+) = 5alpha-androstan-3,17-dione + NADH + H(+). It catalyses the reaction 5alpha-androstane-3alpha,17beta-diol + NAD(+) = 17beta-hydroxy-5alpha-androstan-3-one + NADH + H(+). It participates in cofactor metabolism; retinol metabolism. Inhibited by 9-cis-, 13-cis- and all-trans-retinoic acids, with the most potent inhibitor being 13-cis-retinoic acid. Weakly inhibited by oleic acid. Its function is as follows. Catalyzes the oxidation of cis-isomers of retinol, including 11-cis-, 9-cis-, and 13-cis-retinol in an NAD-dependent manner. Has no activity towards all-trans retinal. Plays a significant role in 11-cis retinol oxidation in the retinal pigment epithelium cells (RPE). Also recognizes steroids (androsterone, androstanediol) as its substrates. In Mus musculus (Mouse), this protein is Retinol dehydrogenase 5.